Here is a 408-residue protein sequence, read N- to C-terminus: Prenyltransferase criF (408 aa).

Dimethylallyl diphosphate is bound by residues arginine 94, lysine 181, tyrosine 183, arginine 248, lysine 250, tyrosine 252, glutamine 334, tyrosine 336, tyrosine 400, and tyrosine 404.

This sequence belongs to the tryptophan dimethylallyltransferase family. In terms of assembly, homodimer.

The enzyme catalyses preechinulin + dimethylallyl diphosphate = tardioxopiperazine B + diphosphate. The catalysed reaction is preechinulin + dimethylallyl diphosphate = tardioxopiperazine A + diphosphate. It catalyses the reaction tardioxopiperazine A + dimethylallyl diphosphate = echinulin + diphosphate. It carries out the reaction tardioxopiperazine A + dimethylallyl diphosphate = variecolorin L + diphosphate. The enzyme catalyses neoechinulin A + dimethylallyl diphosphate = variecolorin G + diphosphate. The catalysed reaction is neoechinulin A + dimethylallyl diphosphate = isoechinulin A + diphosphate. It catalyses the reaction isoechinulin A + dimethylallyl diphosphate = dehydroechinulin + diphosphate. It carries out the reaction neoechinulin B + dimethylallyl diphosphate = isoechinulin B + diphosphate. It functions in the pathway secondary metabolite biosynthesis. It participates in alkaloid biosynthesis. Its function is as follows. Prenyltransferase; part of the gene cluster that mediates the biosynthesis of echinulin family alkaloid. The pathway begins with the biosynthesis of the cyclic dipeptide cyclo-L-Trp-L-Ala (cyclo-TA) by the NRPS criC via condensation of L-alanine and L-tryptophan. The prenyltransferase criA then catalyzes the first prenylation step, a reverse prenylation reaction at C2, to yield preechinulin. Preechinulin is the substrate of the cytochrome P450 monooxygenase criE that catalyzes the formation of the double bond between C10 and C11 to produce neoechulin A. The unique prenyltransferase criF functions as a competitive enzyme with criE for preechinulin metabolization and uses preechinulin for effective regiospecific prenylations. Preechinulin is prenylated by criF at C5 or C7. C7-prenylation leads to accumulation of tardioxopiperazine B without further modification by criF. In contrast, the C5-prenylated tardioxopiperazine A can be prenylated again by criF, predominantly at C7 to form echinulin or less frequently at C4 to give variecolorin L. CriF also accepts neoechilunin A to produce varlecolorin G (prenylation at C5) or isoechinulin A (prenylation at C7). CriF further converts isoechinulin A into dehydroechinulin. Moreover, a yet unidentified enzyme can also convert neoechilunin A into neoechilunin B by introducing a double bond between positions C14 and C17 and thus provides a further substrate to criF for C5 and C7 prenylation. The polypeptide is Prenyltransferase criF (Aspergillus cristatus (Chinese Fuzhuan brick tea-fermentation fungus)).